Reading from the N-terminus, the 325-residue chain is G-protein coupled receptor E6 (325 aa).

The next 7 helical transmembrane spans lie at 45 to 65 (LFGT…MGFF), 71 to 91 (FTPS…LWLM), 106 to 126 (IVTE…NVGM), 145 to 165 (PAAI…VIAV), 198 to 218 (LVAK…GTAL), 233 to 253 (AICV…LTAM), and 274 to 294 (VFIY…MFTG).

This sequence belongs to the G-protein coupled receptor 1 family.

Its subcellular location is the host membrane. The sequence is that of G-protein coupled receptor E6 (E6) from Equus caballus (Horse).